Reading from the N-terminus, the 432-residue chain is Sonic hedgehog protein (432 aa).

The first 26 residues, 1–26 (MDEMILLRRVLLAGFICALLVPSGLS), serve as a signal peptide directing secretion. Residue Cys27 is the site of N-palmitoyl cysteine attachment. Residues 35 to 41 (TRKRFKK) carry the Cardin-Weintraub motif. Ca(2+)-binding residues include Glu92, Glu93, Asp98, Thr128, Glu129, Asp132, and Asp134. Positions 143, 150, and 185 each coordinate Zn(2+). Gly200 carries Cholesterol glycine ester lipidation.

The protein belongs to the hedgehog family. As to quaternary structure, interacts with HHATL/GUP1 which negatively regulates HHAT-mediated palmitoylation of the SHH N-terminus. Interacts with BOC and CDON. Interacts with HHIP. Interacts with DISP1 via its cholesterol anchor. Interacts with SCUBE2. In terms of assembly, multimer. In terms of processing, the C-terminal domain displays an autoproteolysis activity and a cholesterol transferase activity. Both activities result in the cleavage of the full-length protein and covalent attachment of a cholesterol moiety to the C-terminal of the newly generated N-terminal fragment (ShhN). Cholesterylation is required for the sonic hedgehog protein N-product targeting to lipid rafts and multimerization. ShhN is the active species in both local and long-range signaling, whereas the C-product (ShhC) is degraded in the reticulum endoplasmic. Post-translationally, N-palmitoylation by HHAT of ShhN is required for sonic hedgehog protein N-product multimerization and full activity. It is a prerequisite for the membrane-proximal positioning and the subsequent shedding of this N-terminal peptide. The lipidated N- and C-terminal peptides of ShhNp can be cleaved (shedding). The N-terminal palmitoylated peptide is cleaved at the Cardin-Weintraub (CW) motif site. The cleavage reduced the interactions with heparan sulfate. The cleavage is enhanced by SCUBE2.

The protein resides in the endoplasmic reticulum membrane. It localises to the golgi apparatus membrane. It is found in the cell membrane. It catalyses the reaction glycyl-L-cysteinyl-[protein] + cholesterol + H(+) = [protein]-C-terminal glycyl cholesterol ester + N-terminal L-cysteinyl-[protein]. In terms of biological role, the C-terminal part of the sonic hedgehog protein precursor displays an autoproteolysis and a cholesterol transferase activity. Both activities result in the cleavage of the full-length protein into two parts (ShhN and ShhC) followed by the covalent attachment of a cholesterol moiety to the C-terminal of the newly generated ShhN. Both activities occur in the endoplasmic reticulum. Once cleaved, ShhC is degraded in the endoplasmic reticulum. Its function is as follows. The dually lipidated sonic hedgehog protein N-product (ShhNp) is a morphogen which is essential for a variety of patterning events during development. Induces ventral cell fate in the neural tube and somites. Involved in the patterning of the anterior-posterior axis of the developing limb bud. Essential for axon guidance. Binds to the patched (PTCH1) receptor, which functions in association with smoothened (SMO), to activate the transcription of target genes. In the absence of SHH, PTCH1 represses the constitutive signaling activity of SMO. In Cynops pyrrhogaster (Japanese fire-bellied newt), this protein is Sonic hedgehog protein.